The following is a 37-amino-acid chain: Large ribosomal subunit protein bL36 (37 aa).

Belongs to the bacterial ribosomal protein bL36 family.

The polypeptide is Large ribosomal subunit protein bL36 (Ureaplasma parvum serovar 3 (strain ATCC 27815 / 27 / NCTC 11736)).